Here is a 382-residue protein sequence, read N- to C-terminus: Chaperone protein DnaJ (382 aa).

In terms of domain architecture, J spans 5–70 (DYYETLGVSR…NKRAAYDRYG (66 aa)). Residues 140–218 (GKTAQIRVPT…CHGQGRITEE (79 aa)) form a CR-type zinc finger. Zn(2+) contacts are provided by Cys153, Cys156, Cys170, Cys173, Cys192, Cys195, Cys206, and Cys209. CXXCXGXG motif repeat units lie at residues 153–160 (CDVCSGSG), 170–177 (CGTCQGSG), 192–199 (CPTCHGRG), and 206–213 (CGKCHGQG).

The protein belongs to the DnaJ family. Homodimer. The cofactor is Zn(2+).

The protein localises to the cytoplasm. Functionally, participates actively in the response to hyperosmotic and heat shock by preventing the aggregation of stress-denatured proteins and by disaggregating proteins, also in an autonomous, DnaK-independent fashion. Unfolded proteins bind initially to DnaJ; upon interaction with the DnaJ-bound protein, DnaK hydrolyzes its bound ATP, resulting in the formation of a stable complex. GrpE releases ADP from DnaK; ATP binding to DnaK triggers the release of the substrate protein, thus completing the reaction cycle. Several rounds of ATP-dependent interactions between DnaJ, DnaK and GrpE are required for fully efficient folding. Also involved, together with DnaK and GrpE, in the DNA replication of plasmids through activation of initiation proteins. The chain is Chaperone protein DnaJ from Rhizobium rhizogenes (strain K84 / ATCC BAA-868) (Agrobacterium radiobacter).